The following is a 312-amino-acid chain: Pre-mRNA-splicing factor 38A (312 aa).

The segment at 1–179 (MANRTVKDAH…VLEETEQLDP (179 aa)) is N-terminal protein interaction domain. The interval 180-312 (RVSALEEDMD…SHKKSRRGNE (133 aa)) is disordered. Residues 184–201 (LEEDMDDVESSEEEEDED) show a composition bias toward acidic residues. Over residues 202 to 223 (EKGRDPSPEHHRRNYRDLDRPR) the composition is skewed to basic and acidic residues. 2 stretches are compositionally biased toward basic residues: residues 224–294 (RSPS…RSHS) and 301–312 (KKSHKKSRRGNE).

This sequence belongs to the PRP38 family. In terms of assembly, component of the spliceosome B complex.

The protein localises to the nucleus. Its function is as follows. Involved in pre-mRNA splicing as a component of the spliceosome. The chain is Pre-mRNA-splicing factor 38A (prpf38a) from Xenopus tropicalis (Western clawed frog).